Reading from the N-terminus, the 300-residue chain is Glucose and ribitol dehydrogenase homolog (300 aa).

Positions 1 to 14 (MASQQFPPQNQETQ) are enriched in polar residues. Residues 1-23 (MASQQFPPQNQETQPGKEHAMDP) are disordered. 44-68 (IVTGGDSGIGRAVCLCFALEGATVA) is an NAD(+) binding site. S192 lines the substrate pocket. The active-site Proton acceptor is the Y205.

This sequence belongs to the short-chain dehydrogenases/reductases (SDR) family.

Its function is as follows. May act as a short alcohol-polyol-sugar dehydrogenase possibly related to carbohydrate metabolism and the acquisition of desiccation tolerance. May also be involved in signal transduction. This Oryza sativa subsp. japonica (Rice) protein is Glucose and ribitol dehydrogenase homolog.